The primary structure comprises 331 residues: Adenosine deaminase (331 aa).

2 residues coordinate Zn(2+): histidine 12 and histidine 14. Residues histidine 14, aspartate 16, and glycine 170 each contribute to the substrate site. Histidine 197 provides a ligand contact to Zn(2+). The active-site Proton donor is glutamate 200. Position 278 (aspartate 278) interacts with Zn(2+). Aspartate 279 contacts substrate.

It belongs to the metallo-dependent hydrolases superfamily. Adenosine and AMP deaminases family. Adenosine deaminase subfamily. Requires Zn(2+) as cofactor.

The enzyme catalyses adenosine + H2O + H(+) = inosine + NH4(+). It carries out the reaction 2'-deoxyadenosine + H2O + H(+) = 2'-deoxyinosine + NH4(+). Its function is as follows. Catalyzes the hydrolytic deamination of adenosine and 2-deoxyadenosine. This chain is Adenosine deaminase, found in Shewanella sp. (strain W3-18-1).